The following is a 302-amino-acid chain: Probable lipid kinase YegS-like (302 aa).

Residues 1–129 enclose the DAGKc domain; sequence MDKDKVLLVL…IDLGEVNGKL (129 aa). ATP contacts are provided by residues threonine 39, 65–71, and threonine 92; that span reads GDGTLRE. The Mg(2+) site is built by arginine 210, aspartate 213, and leucine 215. Glutamate 268 acts as the Proton acceptor in catalysis.

The protein belongs to the diacylglycerol/lipid kinase family. YegS lipid kinase subfamily. Mg(2+) is required as a cofactor. The cofactor is Ca(2+).

The protein localises to the cytoplasm. Probably phosphorylates lipids; the in vivo substrate is unknown. This is Probable lipid kinase YegS-like from Pseudomonas aeruginosa (strain ATCC 15692 / DSM 22644 / CIP 104116 / JCM 14847 / LMG 12228 / 1C / PRS 101 / PAO1).